A 403-amino-acid chain; its full sequence is Lipase lipl-5 (403 aa).

The signal sequence occupies residues 1 to 18 (MWRFAVFLAAFFVQDVVG). Residue Asn64 is glycosylated (N-linked (GlcNAc...) asparagine). Ser167 functions as the Nucleophile in the catalytic mechanism. N-linked (GlcNAc...) asparagine glycosylation is present at Asn271. Active-site charge relay system residues include Asp343 and His375.

This sequence belongs to the AB hydrolase superfamily. Lipase family.

The protein localises to the lysosome lumen. The protein resides in the secreted. Functionally, lipase involved in lipid homeostasis. Regulates mitochondrial lipid composition, in particular cardiolipins and coenzyme Q-9 levels, in response to nutrient availability. Does not affect global triglyceride levels in response to nutrient availability. However, in coelomocytes, specifically promotes triglyceride catabolism and lifespan extension in response to nutrient deprivation. The protein is Lipase lipl-5 of Caenorhabditis elegans.